The following is a 377-amino-acid chain: tRNA(Met) cytidine acetate ligase (377 aa).

Residues 7-20, Gly-101, Asn-151, and Arg-176 each bind ATP; that span reads VVEYNPFHNGHRYH.

The protein belongs to the TmcAL family.

The protein resides in the cytoplasm. It carries out the reaction cytidine(34) in elongator tRNA(Met) + acetate + ATP = N(4)-acetylcytidine(34) in elongator tRNA(Met) + AMP + diphosphate. Its function is as follows. Catalyzes the formation of N(4)-acetylcytidine (ac(4)C) at the wobble position of elongator tRNA(Met), using acetate and ATP as substrates. First activates an acetate ion to form acetyladenylate (Ac-AMP) and then transfers the acetyl group to tRNA to form ac(4)C34. The chain is tRNA(Met) cytidine acetate ligase from Limosilactobacillus reuteri (strain DSM 20016) (Lactobacillus reuteri).